The chain runs to 374 residues: DNA replication and repair protein RecF (374 aa).

Residue 34–41 participates in ATP binding; that stretch reads GDNGAGKT.

It belongs to the RecF family.

It is found in the cytoplasm. In terms of biological role, the RecF protein is involved in DNA metabolism; it is required for DNA replication and normal SOS inducibility. RecF binds preferentially to single-stranded, linear DNA. It also seems to bind ATP. The polypeptide is DNA replication and repair protein RecF (Rhizobium etli (strain ATCC 51251 / DSM 11541 / JCM 21823 / NBRC 15573 / CFN 42)).